The following is a 380-amino-acid chain: Cytochrome b (380 aa).

Transmembrane regions (helical) follow at residues phenylalanine 34–alanine 54, tryptophan 78–isoleucine 99, tryptophan 114–leucine 134, and phenylalanine 179–threonine 199. The heme b site is built by histidine 84 and histidine 98. 2 residues coordinate heme b: histidine 183 and histidine 197. Residue histidine 202 participates in a ubiquinone binding. The next 4 helical transmembrane spans lie at leucine 227 to serine 247, leucine 289 to histidine 309, phenylalanine 321 to serine 341, and phenylalanine 348 to proline 368.

It belongs to the cytochrome b family. As to quaternary structure, the cytochrome bc1 complex contains 11 subunits: 3 respiratory subunits (MT-CYB, CYC1 and UQCRFS1), 2 core proteins (UQCRC1 and UQCRC2) and 6 low-molecular weight proteins (UQCRH/QCR6, UQCRB/QCR7, UQCRQ/QCR8, UQCR10/QCR9, UQCR11/QCR10 and a cleavage product of UQCRFS1). This cytochrome bc1 complex then forms a dimer. The cofactor is heme b.

Its subcellular location is the mitochondrion inner membrane. Its function is as follows. Component of the ubiquinol-cytochrome c reductase complex (complex III or cytochrome b-c1 complex) that is part of the mitochondrial respiratory chain. The b-c1 complex mediates electron transfer from ubiquinol to cytochrome c. Contributes to the generation of a proton gradient across the mitochondrial membrane that is then used for ATP synthesis. The sequence is that of Cytochrome b (MT-CYB) from Bugeranus carunculatus (Wattled crane).